A 64-amino-acid polypeptide reads, in one-letter code: DNA-directed RNA polymerase subunit Rpo10 (64 aa).

Residues cysteine 7, cysteine 10, cysteine 45, and cysteine 46 each contribute to the Zn(2+) site.

This sequence belongs to the archaeal Rpo10/eukaryotic RPB10 RNA polymerase subunit family. In terms of assembly, part of the RNA polymerase complex. Zn(2+) serves as cofactor.

The protein localises to the cytoplasm. The catalysed reaction is RNA(n) + a ribonucleoside 5'-triphosphate = RNA(n+1) + diphosphate. DNA-dependent RNA polymerase (RNAP) catalyzes the transcription of DNA into RNA using the four ribonucleoside triphosphates as substrates. This is DNA-directed RNA polymerase subunit Rpo10 from Natronomonas pharaonis (strain ATCC 35678 / DSM 2160 / CIP 103997 / JCM 8858 / NBRC 14720 / NCIMB 2260 / Gabara) (Halobacterium pharaonis).